We begin with the raw amino-acid sequence, 753 residues long: Rho guanine nucleotide exchange factor gef1 (753 aa).

Disordered stretches follow at residues 52–150, 175–194, and 200–245; these read SNSY…DRNR, TLRK…RVSG, and AQNS…ASLL. 4 stretches are compositionally biased toward polar residues: residues 94 to 105, 114 to 141, 181 to 191, and 200 to 220; these read DPQTPNTPPVSS, GSFN…TLTP, TNTSSNGTSRR, and AQNS…GSST. The segment covering 230-245 has biased composition (low complexity); that stretch reads TLASMPSSHSSTASLL. One can recognise a DH domain in the interval 311–507; it reads KRANLIKELV…QELISGINQK (197 aa).

In terms of assembly, interacts with cdc42.

It is found in the cytoplasm. Has a role in the control of cell polarity and cytokinesis. Involved in bipolar growth, via modulation of cdc42-shk1-orb6 signaling, and septum formation. Stimulates guanine nucleotide exchange of cdc42. This chain is Rho guanine nucleotide exchange factor gef1 (gef1), found in Schizosaccharomyces pombe (strain 972 / ATCC 24843) (Fission yeast).